The sequence spans 1207 residues: DNA-directed RNA polymerase subunit beta' (1207 aa).

Zn(2+) is bound by residues Cys60, Cys62, Cys75, and Cys78. 3 residues coordinate Mg(2+): Asp449, Asp451, and Asp453. Zn(2+) contacts are provided by Cys822, Cys896, Cys903, and Cys906.

Belongs to the RNA polymerase beta' chain family. As to quaternary structure, the RNAP catalytic core consists of 2 alpha, 1 beta, 1 beta' and 1 omega subunit. When a sigma factor is associated with the core the holoenzyme is formed, which can initiate transcription. Mg(2+) serves as cofactor. The cofactor is Zn(2+).

It catalyses the reaction RNA(n) + a ribonucleoside 5'-triphosphate = RNA(n+1) + diphosphate. In terms of biological role, DNA-dependent RNA polymerase catalyzes the transcription of DNA into RNA using the four ribonucleoside triphosphates as substrates. The protein is DNA-directed RNA polymerase subunit beta' of Staphylococcus aureus (strain NCTC 8325 / PS 47).